Here is an 86-residue protein sequence, read N- to C-terminus: Small ribosomal subunit protein uS17 (86 aa).

Belongs to the universal ribosomal protein uS17 family. In terms of assembly, part of the 30S ribosomal subunit.

Its function is as follows. One of the primary rRNA binding proteins, it binds specifically to the 5'-end of 16S ribosomal RNA. The polypeptide is Small ribosomal subunit protein uS17 (Caldicellulosiruptor saccharolyticus (strain ATCC 43494 / DSM 8903 / Tp8T 6331)).